The following is a 682-amino-acid chain: Probable xyloglucan glycosyltransferase 6 (682 aa).

A run of 2 helical transmembrane segments spans residues 109–129 (LIKG…AAYF) and 173–193 (IVLF…CFWI). Residue Asp-260 is part of the active site. The substrate site is built by Asp-319 and Asp-321. Asp-413 is an active-site residue. 2 helical membrane-spanning segments follow: residues 491–511 (LILP…TMFF) and 516–536 (LPSW…IIPA). Ser-608 carries the phosphoserine modification. The next 2 membrane-spanning stretches (helical) occupy residues 632 to 651 (LYRT…VRSL) and 657 to 677 (IHFY…LDLI).

This sequence belongs to the glycosyltransferase 2 family. Plant cellulose synthase-like C subfamily. In terms of assembly, homodimer. In terms of tissue distribution, mainly expressed in flowers and seeds, and, to a lower extent, in seedlings, roots, leaves and stems.

Its subcellular location is the golgi apparatus membrane. Probable beta-1,4-glucan synthase rather involved in the synthesis of the xyloglucan backbone than cellulose. Seems to work simultaneously with xyloglucan 6-xylosyltransferase. Xyloglucan is a noncellulosic polysaccharides of plant cell wall and consists of a glucan backbone substituted by xylose, galactose and fucose. The chain is Probable xyloglucan glycosyltransferase 6 from Arabidopsis thaliana (Mouse-ear cress).